Consider the following 293-residue polypeptide: Ribosomal protein L11 methyltransferase (293 aa).

The S-adenosyl-L-methionine site is built by threonine 145, glycine 166, aspartate 188, and asparagine 230.

This sequence belongs to the methyltransferase superfamily. PrmA family.

Its subcellular location is the cytoplasm. The enzyme catalyses L-lysyl-[protein] + 3 S-adenosyl-L-methionine = N(6),N(6),N(6)-trimethyl-L-lysyl-[protein] + 3 S-adenosyl-L-homocysteine + 3 H(+). Its function is as follows. Methylates ribosomal protein L11. This Klebsiella pneumoniae (strain 342) protein is Ribosomal protein L11 methyltransferase.